Consider the following 484-residue polypeptide: T-complex protein 1 subunit delta (484 aa).

This sequence belongs to the TCP-1 chaperonin family. Component of the T-complex protein 1 (TCP1) complex.

Its subcellular location is the cytoplasm. Functionally, molecular chaperone; assists the folding of proteins upon ATP hydrolysis. The protein is T-complex protein 1 subunit delta (CCT4) of Encephalitozoon cuniculi (strain GB-M1) (Microsporidian parasite).